The sequence spans 259 residues: uncharacterized protein (259 aa).

Disordered stretches follow at residues 22-68 (GLQP…VSFG), 111-133 (REEQ…DEVE), and 181-202 (LGGK…KKKQ). Acidic residues predominate over residues 50–63 (NEEEDAISDMEDKE). Serine 127 bears the Phosphoserine mark.

This is an uncharacterized protein from Schizosaccharomyces pombe (strain 972 / ATCC 24843) (Fission yeast).